The primary structure comprises 270 residues: tRNA pseudouridine synthase A (270 aa).

Catalysis depends on Asp-60, which acts as the Nucleophile. Residue Tyr-118 participates in substrate binding.

This sequence belongs to the tRNA pseudouridine synthase TruA family. In terms of assembly, homodimer.

The enzyme catalyses uridine(38/39/40) in tRNA = pseudouridine(38/39/40) in tRNA. Its function is as follows. Formation of pseudouridine at positions 38, 39 and 40 in the anticodon stem and loop of transfer RNAs. The polypeptide is tRNA pseudouridine synthase A (Cronobacter sakazakii (strain ATCC BAA-894) (Enterobacter sakazakii)).